A 155-amino-acid chain; its full sequence is MSRRGTAEKKTAKYDPIYRNRLVNMLVNRILKHGKKSLAYQIIYRAVKKIQQKTETNPLSVLRQAIRGVTPDITVKARRVGGSTHQVPVEIGSTQGKALAVRWLLAASRKRPGRDMAFKLSSELVDAAKGSGDAIRKKEETHRMAEANRAFAHFR.

Belongs to the universal ribosomal protein uS7 family. In terms of assembly, part of the 30S ribosomal subunit.

Its subcellular location is the plastid. In terms of biological role, one of the primary rRNA binding proteins, it binds directly to 16S rRNA where it nucleates assembly of the head domain of the 30S subunit. The chain is Small ribosomal subunit protein uS7cz/uS7cy (rps7-A) from Cuscuta exaltata (Tall dodder).